Reading from the N-terminus, the 513-residue chain is Zinc finger CCCH-type with G patch domain-containing protein (513 aa).

The C3H1-type zinc-finger motif lies at 155-178 (PCSYYLEGECRFDETKCRFSHGAL). A compositionally biased stretch (acidic residues) spans 252–261 (DQEEDDELSS). Residues 252-282 (DQEEDDELSSEESNSSMNNESSDEAESDMDD) form a disordered region. Positions 262-271 (EESNSSMNNE) are enriched in low complexity. Residues 272 to 282 (SSDEAESDMDD) are compositionally biased toward acidic residues. The 47-residue stretch at 312–358 (TRGIGSKLMEKMGYIHGTGLGSDGRGIVTPVSAQILPQGRSLDACME) folds into the G-patch domain. Residues 478 to 495 (VQMQSHKQELATLQAQER) show a composition bias toward polar residues. The disordered stretch occupies residues 478 to 513 (VQMQSHKQELATLQAQERSLSKEQQTRKSKNKMFEF). The segment covering 496-513 (SLSKEQQTRKSKNKMFEF) has biased composition (basic and acidic residues).

The protein resides in the nucleus. Functionally, transcription repressor. This is Zinc finger CCCH-type with G patch domain-containing protein from Drosophila erecta (Fruit fly).